The chain runs to 300 residues: Zinc finger protein RME1 (300 aa).

Residues 80–90 show a composition bias toward polar residues; sequence QAYDSTSSTEE. The disordered stretch occupies residues 80 to 100; the sequence is QAYDSTSSTEEGTAPQLRPDE. 3 consecutive C2H2-type zinc fingers follow at residues 178 to 199, 206 to 234, and 256 to 281; these read YHCS…HLDE, CKCP…ASQH, and LNCP…AMVH.

The protein resides in the nucleus. In terms of biological role, involved in the control of meiosis. Represses the transcription of the IME1 gene thereby inhibiting cells from entering meiosis. But also activates the CLN2 gene thus promoting mitosis. The sequence is that of Zinc finger protein RME1 (RME1) from Saccharomyces cerevisiae (strain ATCC 204508 / S288c) (Baker's yeast).